A 131-amino-acid polypeptide reads, in one-letter code: Transcription antitermination protein NusB (131 aa).

It belongs to the NusB family.

Involved in transcription antitermination. Required for transcription of ribosomal RNA (rRNA) genes. Binds specifically to the boxA antiterminator sequence of the ribosomal RNA (rrn) operons. This Campylobacter curvus (strain 525.92) protein is Transcription antitermination protein NusB.